The sequence spans 502 residues: tRNA-2-methylthio-N(6)-dimethylallyladenosine synthase (502 aa).

The MTTase N-terminal domain occupies 12 to 129 (RTYQVRTYGC…LPVLLERARH (118 aa)). Residues Cys-21, Cys-58, Cys-92, Cys-166, Cys-170, and Cys-173 each contribute to the [4Fe-4S] cluster site. In terms of domain architecture, Radical SAM core spans 152–383 (RESTYAGWVS…ACVEEITWAE (232 aa)). Residues 385 to 455 (RRLVGETVEV…PHHLNADGEP (71 aa)) form the TRAM domain. Residues 451 to 502 (ADGEPLAHRRTPAGDAAEAGRRPRTAGVSLGLPTVGAPPSPVPPAASSACAC) form a disordered region.

The protein belongs to the methylthiotransferase family. MiaB subfamily. As to quaternary structure, monomer. The cofactor is [4Fe-4S] cluster.

It is found in the cytoplasm. The enzyme catalyses N(6)-dimethylallyladenosine(37) in tRNA + (sulfur carrier)-SH + AH2 + 2 S-adenosyl-L-methionine = 2-methylsulfanyl-N(6)-dimethylallyladenosine(37) in tRNA + (sulfur carrier)-H + 5'-deoxyadenosine + L-methionine + A + S-adenosyl-L-homocysteine + 2 H(+). Catalyzes the methylthiolation of N6-(dimethylallyl)adenosine (i(6)A), leading to the formation of 2-methylthio-N6-(dimethylallyl)adenosine (ms(2)i(6)A) at position 37 in tRNAs that read codons beginning with uridine. This Salinispora arenicola (strain CNS-205) protein is tRNA-2-methylthio-N(6)-dimethylallyladenosine synthase.